We begin with the raw amino-acid sequence, 425 residues long: MSRVNTMHQWKERLRDRARTASFGRFLWRRFLDDRLFQAAASLAYTTVFALVPLAIVVFGVLSAFPAFNEWKDALTDFIFNNFVPGAARSVQNYLNRSLEDLGKFTVAGMVALVASLLITLHSIEQTFNSIWRVAAARPKVTRFLIYWTVLTLGTMLAAASMAMAAYVFALPLFRTTEGQWLAEFAWRLAPMAVEFVCIVLIYRVVPQHAVRLRHALPGALLAVILMEIVKWGFGFYLGNFQTYQRIYGALSALPILLLWIYLSWVSVLLGASLASSMSAFRYQPEAMRLPPGFEIYGLLRLLGRFRQARLHGNGLDEDRILALEPMLTDTLMQELLCELKRIRLLRRDERGNWLLARDLDVVPLAELYESCQLRVPVEDRPLPCRDDPYGQAAAAALEQLRQPLRSVLAQPVGDLYTHLPGDPP.

The next 6 helical transmembrane spans lie at 48–68, 105–125, 154–174, 182–202, 216–236, and 250–270; these read VFALVPLAIVVFGVLSAFPAF, FTVAGMVALVASLLITLHSIE, GTMLAAASMAMAAYVFALPLF, LAEFAWRLAPMAVEFVCIVLI, ALPGALLAVILMEIVKWGFGF, and ALSALPILLLWIYLSWVSVLL.

Belongs to the UPF0761 family.

The protein localises to the cell inner membrane. This chain is UPF0761 membrane protein XC_3370, found in Xanthomonas campestris pv. campestris (strain 8004).